Reading from the N-terminus, the 348-residue chain is Mannonate dehydratase (348 aa).

The protein belongs to the mannonate dehydratase family. The cofactor is Fe(2+). Mn(2+) serves as cofactor.

It carries out the reaction D-mannonate = 2-dehydro-3-deoxy-D-gluconate + H2O. Its pathway is carbohydrate metabolism; pentose and glucuronate interconversion. Its function is as follows. Catalyzes the dehydration of D-mannonate. This Streptococcus uberis (strain ATCC BAA-854 / 0140J) protein is Mannonate dehydratase.